A 47-amino-acid polypeptide reads, in one-letter code: Zinc-finger protein TK0143 (47 aa).

Residues 18 to 41 (FRCPRCGMVFRSAKAYTRHVNKAH) form a C2H2-type zinc finger. The Zn(2+) site is built by Cys-20, Cys-23, His-36, and His-41.

In terms of assembly, crystallized in association with 70S ribosomes. It depends on Zn(2+) as a cofactor.

The protein is Zinc-finger protein TK0143 of Thermococcus kodakarensis (strain ATCC BAA-918 / JCM 12380 / KOD1) (Pyrococcus kodakaraensis (strain KOD1)).